Reading from the N-terminus, the 1142-residue chain is Envelopment polyprotein (1142 aa).

Positions 1–21 (MSKFCLCLSLLGVLLLQVCDT) are cleaved as a signal peptide. Over 22–489 (RSLLELKIEC…LCVPGIHGWS (468 aa)) the chain is Lumenal. Cystine bridges form between C31-C156, C65-C162, C114-C133, C138-C143, C180-C190, and C215-C253. N-linked (GlcNAc...) asparagine; by host glycosylation is present at N139. An N-linked (GlcNAc...) asparagine; by host glycan is attached at N353. 4 disulfide bridges follow: C382–C441, C386–C395, C411–C430, and C458–C481. N-linked (GlcNAc...) asparagine; by host glycosylation occurs at N405. Residues 490–510 (TIALLATFCFGWLLIPIISLV) form a helical membrane-spanning segment. Over 511–633 (SIKIMLLFAY…LSVFRYRSRC (123 aa)) the chain is Cytoplasmic. The tract at residues 522–539 (CSKYSNDSKFRLLIEKVK) is binding to the ribonucleoprotein. 2 consecutive CCHC-type zinc fingers follow at residues 551–571 (CEVC…KKSC) and 576–597 (CPYC…FKVC). 3 binding to the ribonucleoprotein regions span residues 594–611 (FKVC…RKSL), 598–609 (KLTTRFQENLRK), and 617–631 (KRGC…RYRS). An ITAM domain is found at 617-640 (KRGCYRTLSVFRYRSRCFVGLVWC). The short motif at 621 to 624 (YRTL) is the YxxL element. The chain crosses the membrane as a helical span at residues 634–654 (FVGLVWCILLVLELVIWAASA). Residues 655–1110 (DTVEIKTGWT…EWLMGILSGN (456 aa)) lie on the Lumenal side of the membrane. Disulfide bonds link C741–C776, C745–C783, C757–C890, C771–C901, C786–C909, C812–C821, C829–C838, and C869–C873. Residues 763–783 (YEFETGWGCNPGDCPGVGTGC) are fusion loop. N933 carries an N-linked (GlcNAc...) asparagine; by host glycan. 5 disulfide bridges follow: C975/C1005, C998/C1050, C1015/C1020, C1051/C1056, and C1090/C1094. The chain crosses the membrane as a helical span at residues 1111–1131 (WMVVAVLVVLLILSIFLFSLC). The tract at residues 1127 to 1142 (LFSLCCPRRVVHKKSS) is binding to the ribonucleoprotein. At 1132–1142 (CPRRVVHKKSS) the chain is on the cytoplasmic side.

It belongs to the hantavirus envelope glycoprotein family. Homodimer. Homotetramer; forms heterotetrameric Gn-Gc spikes in the pre-fusion conformation. Interacts (via C-terminus) with the nucleoprotein. Interacts with host TUFM; this interaction contributes to the virus-induced degradation of mitochondria by autophagy, which leads to degradation of host MAVS and inhibition of type I interferon (IFN) responses. Interacts with host MAP1LC3B; this interaction contributes to the virus-induced degradation of mitochondria by autophagy, which leads to degradation of host MAVS and inhibition of type I interferon (IFN) responses. As to quaternary structure, homodimer. Homotetramer; forms heterotetrameric Gn-Gc spikes in the pre-fusion conformation. Homotrimer; forms homotrimer in the post-fusion conformation at acidic pH. Interacts (via C-terminus) with the nucleoprotein. In terms of processing, envelope polyprotein precursor is quickly cleaved in vivo just after synthesis, presumably by host signal peptidase.

The protein resides in the virion membrane. It is found in the host cell surface. Its subcellular location is the host Golgi apparatus membrane. The protein localises to the host endoplasmic reticulum membrane. It localises to the host mitochondrion. Its function is as follows. Forms homotetramers with glycoprotein C at the surface of the virion. Attaches the virion to host cell receptors including integrin alpha5/ITGB1. This attachment induces virion internalization predominantly through clathrin-dependent endocytosis. Mediates the assembly and budding of infectious virus particles through its interaction with the nucleocapsid protein and the viral genome. May dysregulate normal immune and endothelial cell responses through an ITAM motif. Translocates to mitochondria, binds to host TUFM and recruits MAP1LC3B. These interactions induce mitochondrial autophagy and therefore destruction of host MAVS leading to inhibition of type I interferon (IFN) responses. Concomitant breakdown of glycoprotein N is apparently prevented by the nucleoprotein that may inhibit Gn-stimulated autophagosome-lysosome fusion. Interacts with the viral genomic RNA. In terms of biological role, forms homotetramers with glycoprotein N at the surface of the virion. Attaches the virion to host cell receptors including integrin ITGAV/ITGB3. This attachment induces virion internalization predominantly through clathrin-dependent endocytosis. Class II fusion protein that promotes fusion of viral membrane with host endosomal membrane after endocytosis of the virion. The polypeptide is Envelopment polyprotein (GP) (Microtus pennsylvanicus (Meadow vole)).